Here is a 114-residue protein sequence, read N- to C-terminus: Superoxide dismutase [Cu-Zn] (114 aa).

Cu cation is bound by residues His37, His39, and His54. Residues 48–68 (CMSSGPHFNPRNKEHGAPTDE) form a disordered region. 4 residues coordinate Zn(2+): His54, His62, His71, and Asp74. A compositionally biased stretch (basic and acidic residues) spans 58-68 (RNKEHGAPTDE). His111 lines the Cu cation pocket.

Belongs to the Cu-Zn superoxide dismutase family. Homodimer. The cofactor is Cu cation. It depends on Zn(2+) as a cofactor.

The protein resides in the cytoplasm. It carries out the reaction 2 superoxide + 2 H(+) = H2O2 + O2. Destroys radicals which are normally produced within the cells and which are toxic to biological systems. The protein is Superoxide dismutase [Cu-Zn] of Drosophila miranda (Fruit fly).